Reading from the N-terminus, the 153-residue chain is Protein DpnD (153 aa).

The polypeptide is Protein DpnD (Streptococcus pneumoniae serotype 4 (strain ATCC BAA-334 / TIGR4)).